We begin with the raw amino-acid sequence, 329 residues long: DNA-directed RNA polymerase subunit alpha (329 aa).

An alpha N-terminal domain (alpha-NTD) region spans residues 1-234 (MQGSVTEFLK…EQLDAFVELR (234 aa)). The tract at residues 248–329 (FDPILLRPVD…WPPASLADDL (82 aa)) is alpha C-terminal domain (alpha-CTD).

The protein belongs to the RNA polymerase alpha chain family. In terms of assembly, homodimer. The RNAP catalytic core consists of 2 alpha, 1 beta, 1 beta' and 1 omega subunit. When a sigma factor is associated with the core the holoenzyme is formed, which can initiate transcription.

It catalyses the reaction RNA(n) + a ribonucleoside 5'-triphosphate = RNA(n+1) + diphosphate. Its function is as follows. DNA-dependent RNA polymerase catalyzes the transcription of DNA into RNA using the four ribonucleoside triphosphates as substrates. In Shewanella baltica (strain OS155 / ATCC BAA-1091), this protein is DNA-directed RNA polymerase subunit alpha.